The following is a 750-amino-acid chain: Alpha-galactosidase C (750 aa).

An N-terminal signal peptide occupies residues 1-26; the sequence is MFRSTATVAAATAMGLLTATGHGSLA. Residues N58, N162, N186, N194, N366, N428, N432, and N453 are each glycosylated (N-linked (GlcNAc...) asparagine). D511 functions as the Nucleophile in the catalytic mechanism. D573 (proton donor) is an active-site residue.

It belongs to the glycosyl hydrolase 36 family. As to quaternary structure, homotetramer. Requires Mg(2+) as cofactor. NAD(+) serves as cofactor.

The protein localises to the secreted. The enzyme catalyses Hydrolysis of terminal, non-reducing alpha-D-galactose residues in alpha-D-galactosides, including galactose oligosaccharides, galactomannans and galactolipids.. Hydrolyzes a variety of simple alpha-D-galactoside as well as more complex molecules such as oligosaccharides and polysaccharides. Active on paranitrophenyl-alpha-galactoside, raffinose, locust bean gum and gum guar. The sequence is that of Alpha-galactosidase C (aglC) from Emericella nidulans (strain FGSC A4 / ATCC 38163 / CBS 112.46 / NRRL 194 / M139) (Aspergillus nidulans).